The primary structure comprises 449 residues: Deoxyguanosinetriphosphate triphosphohydrolase-like protein (449 aa).

Residues Met1–Arg27 are disordered. A compositionally biased stretch (basic and acidic residues) spans Gln7–Arg27. An HD domain is found at Arg59–Ala255.

This sequence belongs to the dGTPase family. Type 2 subfamily.

This Shewanella baltica (strain OS223) protein is Deoxyguanosinetriphosphate triphosphohydrolase-like protein.